Here is a 143-residue protein sequence, read N- to C-terminus: 1,4-dihydroxy-2-naphthoyl-CoA hydrolase (143 aa).

Residue Asp14 is part of the active site.

This sequence belongs to the 4-hydroxybenzoyl-CoA thioesterase family. DHNA-CoA hydrolase subfamily.

It catalyses the reaction 1,4-dihydroxy-2-naphthoyl-CoA + H2O = 1,4-dihydroxy-2-naphthoate + CoA + H(+). It participates in cofactor biosynthesis; phylloquinone biosynthesis. The protein operates within quinol/quinone metabolism; 1,4-dihydroxy-2-naphthoate biosynthesis; 1,4-dihydroxy-2-naphthoate from chorismate: step 7/7. Its function is as follows. Catalyzes the hydrolysis of 1,4-dihydroxy-2-naphthoyl-CoA (DHNA-CoA) to 1,4-dihydroxy-2-naphthoate (DHNA), a reaction involved in phylloquinone (vitamin K1) biosynthesis. This is 1,4-dihydroxy-2-naphthoyl-CoA hydrolase from Gloeothece citriformis (strain PCC 7424) (Cyanothece sp. (strain PCC 7424)).